A 104-amino-acid polypeptide reads, in one-letter code: Flagellar hook-basal body complex protein FliE (104 aa).

It belongs to the FliE family.

It localises to the bacterial flagellum basal body. The chain is Flagellar hook-basal body complex protein FliE from Escherichia coli (strain SE11).